The chain runs to 2873 residues: WD repeat-containing protein 87 (2873 aa).

WD repeat units follow at residues 108–146 (PCRF…TGLQ), 199–239 (TSSG…PLHS), 242–283 (AHQS…RRLE), 368–407 (SILD…CPAK), 415–460 (NSQD…RLEK), 516–553 (LSSC…SSGS), and 565–604 (LHLC…IGIL). Disordered stretches follow at residues 1049-1124 (FSLD…ESGT), 1177-1199 (DKRD…GKEA), 1392-1413 (EKKT…ERKV), 1531-1607 (SKSK…QEER), and 2199-2338 (KRKE…EEVD). Composition is skewed to basic residues over residues 1089 to 1101 (VKKH…RGLK) and 1187 to 1197 (KLKKKHKKKGK). Residues 1549 to 1574 (EVSREGEEKEQQVTEEQRHIQEEHKW) are compositionally biased toward basic and acidic residues. Residues 1575-1586 (ARIHRKRARAEK) show a composition bias toward basic residues. 2 stretches are compositionally biased toward basic and acidic residues: residues 1587 to 1607 (KRAQ…QEER) and 2204 to 2213 (KRGDKPKEKF). Over residues 2244–2276 (SSEEEEEREEEEEREEEEEREEEEERKEEEEGE) the composition is skewed to acidic residues. The span at 2277-2287 (EKQVEKEEEEK) shows a compositional bias: basic and acidic residues. Acidic residues predominate over residues 2304 to 2337 (EVFEEKEEIMSEEETESLSDEEEEEESCSLEEEV).

The polypeptide is WD repeat-containing protein 87 (WDR87) (Homo sapiens (Human)).